An 840-amino-acid polypeptide reads, in one-letter code: Homeobox-leucine zipper protein HOX9 (840 aa).

Disordered regions lie at residues 1–26 (MAAAVAMRSGSGSDGGGGGYDKAGMD) and 135–160 (NPSLGNDTSCESNVTTPQNPLRDASN). The segment covering 12-21 (GSDGGGGGYD) has biased composition (gly residues). The homeobox DNA-binding region spans 26-89 (DSGKYVRYTP…NRRCRDKQRK (64 aa)). A coiled-coil region spans residues 86-135 (KQRKEASRLQAVNRKLTAMNKLLMEENERLQKQVSQLVHENAYMKQQLQN). In terms of domain architecture, START spans 157 to 385 (DASNPSGLLT…IAQETSGEVV (229 aa)).

Belongs to the HD-ZIP homeobox family. Class III subfamily. As to expression, expressed in seedlings, roots, stems, leaf sheaths and blades and panicles.

It localises to the nucleus. Probable transcription factor. This chain is Homeobox-leucine zipper protein HOX9 (HOX9), found in Oryza sativa subsp. indica (Rice).